The chain runs to 56 residues: Small ribosomal subunit protein uS14 (56 aa).

Residue Ser-9 is modified to Phosphoserine. The residue at position 12 (Arg-12) is an Omega-N-methylarginine. 4 residues coordinate Zn(2+): Cys-21, Cys-24, Cys-39, and Cys-42. Residue Lys-48 is modified to N6-acetyllysine.

It belongs to the universal ribosomal protein uS14 family. As to quaternary structure, component of the 40S small ribosomal subunit. The cofactor is Zn(2+).

It localises to the cytoplasm. It is found in the cytosol. Its subcellular location is the rough endoplasmic reticulum. Component of the small ribosomal subunit. The ribosome is a large ribonucleoprotein complex responsible for the synthesis of proteins in the cell. The protein is Small ribosomal subunit protein uS14 (Rps29) of Mus musculus (Mouse).